The following is a 312-amino-acid chain: Olfactory receptor 2L13 (312 aa).

The Extracellular portion of the chain corresponds to 1–24 (MEKWNHTSNDFILLGLLPPNQTGI). N5 and N20 each carry an N-linked (GlcNAc...) asparagine glycan. Residues 25-48 (FLLCLIILIFFLASVGNSAMIHLI) form a helical membrane-spanning segment. At 49–56 (HVDPRLHT) the chain is on the cytoplasmic side. A helical membrane pass occupies residues 57–78 (PMYFLLSQLSLMDLMYISTTVP). Topologically, residues 79-99 (KMAYNFLSGQKGISFLGCGVQ) are extracellular. C96 and C188 are oxidised to a cystine. The helical transmembrane segment at 100–119 (SFFFLTMACSEGLLLTSMAY) threads the bilayer. The Cytoplasmic portion of the chain corresponds to 120-138 (DRYLAICHSLYYPIRMSKM). The helical transmembrane segment at 139 to 157 (MCVKMIGGSWTLGSINSLA) threads the bilayer. Residues 158 to 194 (HTVFALHIPYCRSRAIDHFFCDVPAMLLLACTDTWVY) lie on the Extracellular side of the membrane. Residues 195-218 (EYMVFVSTSLFLLFPFIGITSSCG) form a helical membrane-spanning segment. Residues 219–235 (RVLFAVYHMHSKEGRKK) are Cytoplasmic-facing. Residues 236-258 (AFTTISTHLTVVIFYYAPFVYTY) traverse the membrane as a helical segment. Topologically, residues 259–271 (LRPRNLRSPAEDK) are extracellular. A helical transmembrane segment spans residues 272–291 (ILAVFYTILTPMLNPIIYSL). The Cytoplasmic segment spans residues 292–312 (RNKEVLGAMRRVFGIFSFLKE).

It belongs to the G-protein coupled receptor 1 family.

Its subcellular location is the cell membrane. Functionally, odorant receptor. This is Olfactory receptor 2L13 (OR2L13) from Homo sapiens (Human).